Here is a 153-residue protein sequence, read N- to C-terminus: Large ribosomal subunit protein uL15 (153 aa).

The interval 1-42 is disordered; it reads MRLNTIKPGMGSTKPRRRVGRGIGSGLGKTCGRGHKGQKSRA. The segment covering 21 to 31 has biased composition (gly residues); the sequence is RGIGSGLGKTC.

It belongs to the universal ribosomal protein uL15 family. Part of the 50S ribosomal subunit.

Functionally, binds to the 23S rRNA. In Nitrosomonas eutropha (strain DSM 101675 / C91 / Nm57), this protein is Large ribosomal subunit protein uL15.